The primary structure comprises 147 residues: UPF0306 protein YhbP (147 aa).

Belongs to the UPF0306 family.

In Escherichia coli O7:K1 (strain IAI39 / ExPEC), this protein is UPF0306 protein YhbP.